We begin with the raw amino-acid sequence, 33 residues long: Dermaseptin-4 (33 aa).

Leu33 is subject to Leucine amide.

In terms of tissue distribution, expressed by the skin glands.

The protein localises to the secreted. Its function is as follows. Has antiparasitic activity against trypomastigote form of T.cruzi (IC(50)=0.25 uM) in vitro but not against L.infantum. Probably acts by permeabilizing cell membranes. In vitro, shows no cytotoxicity against macrophages. Has antibacterial activity. The chain is Dermaseptin-4 from Pithecopus nordestinus (Northeastern Brazilian leaf frog).